A 440-amino-acid polypeptide reads, in one-letter code: Suppressor of cytokine signaling 4 (440 aa).

Positions 1 to 11 (MAENSESNSKN) are enriched in polar residues. Residues 1–29 (MAENSESNSKNVDVRPKTSRSRSADRKDG) form a disordered region. Basic and acidic residues predominate over residues 12 to 29 (VDVRPKTSRSRSADRKDG). The SH2 domain occupies 286-381 (CYWGVMDKYA…FFEPLLSTPL (96 aa)). An SOCS box domain is found at 376–425 (LLSTPLIRTFPFSLQHICRTVICNCTTYDGIDALPIPSSMKLYLKEYHYK).

Its pathway is protein modification; protein ubiquitination. Functionally, SOCS family proteins form part of a classical negative feedback system that regulates cytokine signal transduction. Substrate-recognition component of a SCF-like ECS (Elongin BC-CUL2/5-SOCS-box protein) E3 ubiquitin-protein ligase complex which mediates the ubiquitination and subsequent proteasomal degradation of target proteins. Inhibits EGF signaling by mediating the degradation of the Tyr-phosphorylated EGF receptor/EGFR. This chain is Suppressor of cytokine signaling 4 (SOCS4), found in Bos taurus (Bovine).